A 535-amino-acid chain; its full sequence is EH domain-containing protein 3 (535 aa).

The residue at position 1 (M1) is an N-acetylmethionine. The Dynamin-type G domain maps to 55-286 (FDNKPMVLLV…DLFRDIQSLP (232 aa)). Residues 65–72 (GQYSTGKT) form a G1 motif region. 65–72 (GQYSTGKT) contacts ATP. The tract at residues 91–92 (EP) is G2 motif. The interval 153–156 (DTPG) is G3 motif. The stretch at 198–227 (DEFSEVIKALKNHEDKMRVVLNKADQIETQ) forms a coiled coil. The tract at residues 219–222 (NKAD) is G4 motif. K220 is an ATP binding site. Position 243 (I243) is a region of interest, G5 motif. W258 provides a ligand contact to ATP. A Glycyl lysine isopeptide (Lys-Gly) (interchain with G-Cter in SUMO) cross-link involves residue K315. A phosphoserine mark is found at S349 and S456. Positions 444–532 (DKPMYDEIFY…AHLLPPSKRK (89 aa)) constitute an EH domain. The EF-hand domain maps to 476-511 (LPNSVLGKIWKLADIDKDGMLDDEEFALANHLIKVK). Positions 489, 491, 493, 495, and 500 each coordinate Ca(2+). K511 participates in a covalent cross-link: Glycyl lysine isopeptide (Lys-Gly) (interchain with G-Cter in SUMO).

The protein belongs to the TRAFAC class dynamin-like GTPase superfamily. Dynamin/Fzo/YdjA family. EHD subfamily. In terms of assembly, homooligomer. Heterooligomer with EHD1. Heterooligomer with EHD2 and EHD4; ATP-binding is required for heterooligomerization. Interacts with PACSIN1. Interacts with PACSIN2. Interacts (via EH domain) with MICALL1. Interacts (via EH domain) with RAB11FIP2. Interacts with ANK2. Interacts with CACNA1GG and CACNA1H. Strong expression seen in the kidney, brain and liver. In the kidney, expressed exclusively by glomerular endothelial cells; at protein level. Expressed in skeletal muscle neuromuscular junction perisynaptic region; at protein level.

It is found in the recycling endosome membrane. Its subcellular location is the cell membrane. The protein resides in the cell projection. It localises to the cilium membrane. The protein localises to the cytoplasmic vesicle. Functionally, ATP- and membrane-binding protein that controls membrane reorganization/tubulation upon ATP hydrolysis. In vitro causes tubulation of endocytic membranes. Binding to phosphatidic acid induces its membrane tubulation activity. Plays a role in endocytic transport. Involved in early endosome to recycling endosome compartment (ERC), retrograde early endosome to Golgi, and endosome to plasma membrane (rapid recycling) protein transport. Involved in the regulation of Golgi maintenance and morphology. Involved in the recycling of internalized D1 dopamine receptor. Plays a role in cardiac protein trafficking probably implicating ANK2. Involved in the ventricular membrane targeting of SLC8A1 and CACNA1C and probably the atrial membrane localization of CACNA1GG and CACNA1H implicated in the regulation of atrial myocyte excitability and cardiac conduction. In conjunction with EHD4 may be involved in endocytic trafficking of KDR/VEGFR2 implicated in control of glomerular function. Involved in the rapid recycling of integrin beta-3 implicated in cell adhesion maintenance. Involved in the unidirectional retrograde dendritic transport of endocytosed BACE1 and in efficient sorting of BACE1 to axons implicating a function in neuronal APP processing. Plays a role in the formation of the ciliary vesicle, an early step in cilium biogenesis; possibly sharing redundant functions with Ehd1. The sequence is that of EH domain-containing protein 3 from Mus musculus (Mouse).